The following is a 262-amino-acid chain: Ribosome-recycling factor, mitochondrial (262 aa).

The N-terminal 55 residues, 1 to 55 (MALGLKCFRMVHPTFRNYLAASIRPVSEVTLKTVHERQHGHRQYMAYSAVPVRHF), are a transit peptide targeting the mitochondrion.

Belongs to the RRF family.

The protein localises to the mitochondrion. Functionally, responsible for the disassembly of ribosomes from messenger RNA at the termination of mitochondrial protein biosynthesis. Acts in collaboration with GFM2. Promotes mitochondrial ribosome recycling by dissolution of intersubunit contacts. This chain is Ribosome-recycling factor, mitochondrial, found in Homo sapiens (Human).